The primary structure comprises 293 residues: 4-hydroxy-tetrahydrodipicolinate synthase (293 aa).

Threonine 46 contacts pyruvate. Catalysis depends on tyrosine 134, which acts as the Proton donor/acceptor. Lysine 162 functions as the Schiff-base intermediate with substrate in the catalytic mechanism. Residue isoleucine 204 coordinates pyruvate.

It belongs to the DapA family. As to quaternary structure, homotetramer; dimer of dimers.

It localises to the cytoplasm. It catalyses the reaction L-aspartate 4-semialdehyde + pyruvate = (2S,4S)-4-hydroxy-2,3,4,5-tetrahydrodipicolinate + H2O + H(+). It participates in amino-acid biosynthesis; L-lysine biosynthesis via DAP pathway; (S)-tetrahydrodipicolinate from L-aspartate: step 3/4. Catalyzes the condensation of (S)-aspartate-beta-semialdehyde [(S)-ASA] and pyruvate to 4-hydroxy-tetrahydrodipicolinate (HTPA). This is 4-hydroxy-tetrahydrodipicolinate synthase from Bdellovibrio bacteriovorus (strain ATCC 15356 / DSM 50701 / NCIMB 9529 / HD100).